The following is a 130-amino-acid chain: S-adenosylmethionine decarboxylase proenzyme (130 aa).

Catalysis depends on Ser63, which acts as the Schiff-base intermediate with substrate; via pyruvic acid. Position 63 is a pyruvic acid (Ser); by autocatalysis (Ser63). The active-site Proton acceptor; for processing activity is the His68. Residue Cys83 is the Proton donor; for catalytic activity of the active site.

Belongs to the prokaryotic AdoMetDC family. Type 1 subfamily. Heterotetramer of two alpha and two beta chains arranged as a dimer of alpha/beta heterodimers. Pyruvate is required as a cofactor. In terms of processing, is synthesized initially as an inactive proenzyme. Formation of the active enzyme involves a self-maturation process in which the active site pyruvoyl group is generated from an internal serine residue via an autocatalytic post-translational modification. Two non-identical subunits are generated from the proenzyme in this reaction, and the pyruvate is formed at the N-terminus of the alpha chain, which is derived from the carboxyl end of the proenzyme. The post-translation cleavage follows an unusual pathway, termed non-hydrolytic serinolysis, in which the side chain hydroxyl group of the serine supplies its oxygen atom to form the C-terminus of the beta chain, while the remainder of the serine residue undergoes an oxidative deamination to produce ammonia and the pyruvoyl group blocking the N-terminus of the alpha chain.

The catalysed reaction is S-adenosyl-L-methionine + H(+) = S-adenosyl 3-(methylsulfanyl)propylamine + CO2. Its pathway is amine and polyamine biosynthesis; S-adenosylmethioninamine biosynthesis; S-adenosylmethioninamine from S-adenosyl-L-methionine: step 1/1. Catalyzes the decarboxylation of S-adenosylmethionine to S-adenosylmethioninamine (dcAdoMet), the propylamine donor required for the synthesis of the polyamines spermine and spermidine from the diamine putrescine. The protein is S-adenosylmethionine decarboxylase proenzyme of Thermosipho melanesiensis (strain DSM 12029 / CIP 104789 / BI429).